Consider the following 309-residue polypeptide: Homoserine kinase (309 aa).

91–101 (PIGSGLGSSAC) contacts ATP.

The protein belongs to the GHMP kinase family. Homoserine kinase subfamily.

The protein localises to the cytoplasm. It catalyses the reaction L-homoserine + ATP = O-phospho-L-homoserine + ADP + H(+). Its pathway is amino-acid biosynthesis; L-threonine biosynthesis; L-threonine from L-aspartate: step 4/5. Its function is as follows. Catalyzes the ATP-dependent phosphorylation of L-homoserine to L-homoserine phosphate. The polypeptide is Homoserine kinase (Yersinia pseudotuberculosis serotype O:1b (strain IP 31758)).